Here is a 466-residue protein sequence, read N- to C-terminus: Trigger factor (466 aa).

The region spanning 162–243 is the PPIase FKBP-type domain; the sequence is GDVVSIDLSA…VRSVKERELP (82 aa). Residues 428 to 466 form a disordered region; that stretch reads GNTIDTSEFFGKRVSAGEAEEAEPADEGAARAASDEATT. The span at 457-466 shows a compositional bias: low complexity; that stretch reads ARAASDEATT.

This sequence belongs to the FKBP-type PPIase family. Tig subfamily.

The protein localises to the cytoplasm. The catalysed reaction is [protein]-peptidylproline (omega=180) = [protein]-peptidylproline (omega=0). Involved in protein export. Acts as a chaperone by maintaining the newly synthesized protein in an open conformation. Functions as a peptidyl-prolyl cis-trans isomerase. The protein is Trigger factor of Mycobacterium tuberculosis (strain ATCC 25177 / H37Ra).